A 609-amino-acid polypeptide reads, in one-letter code: QWRF motif-containing protein 4 (609 aa).

2 disordered regions span residues 1–227 (MQVG…IRGN) and 271–369 (EVSS…TAQS). Composition is skewed to polar residues over residues 11–21 (GKQQQSVSDAT) and 46–57 (EVSSRYRSPTPT). 2 stretches are compositionally biased toward low complexity: residues 98–110 (PVSD…PVSS) and 129–143 (SLSV…SVPV). Positions 151-180 (VTSSTDRTLRPSSSNIAHKQQSETTSVTRK) are enriched in polar residues. Low complexity-rich tracts occupy residues 271–285 (EVSS…SSTE) and 302–332 (SAPG…PSRG). The short motif at 407–410 (QWRF) is the QWRF motif element. A disordered region spans residues 588–609 (EEEVRDDAESSPLLPLSKFQWP).

This sequence belongs to the QWRF family.

This Arabidopsis thaliana (Mouse-ear cress) protein is QWRF motif-containing protein 4 (QWRF4).